A 537-amino-acid chain; its full sequence is MQSTLCLPVPSRSLLRFLRCQSKRAFASANHGRDTITTSAIRCRARSLNTVAIRKQSLALTTACERRVTTVEPSLFDKDPVTRKLPDRNQPLTSQNHFSTSRNAQGFWSGRKSSSSYMPTWNSFLKFAGKKNEKALKPDDLPNHDEFGDNSSIFNNRRTLAAKAASEPRLRCTEVDEHGNVILVDGEFKKTELIAKFGLLPRDLRKIDSSNLPHILIRPSAILLNLLHLKVLIKHDRVLLFDIYGSKTSYPQSAFMYDLQGKLQQKTAPGNASLPYEFRALEAVLTSVTSELEADFEAVREPVMHILSELEDDIDRHKLRMLLILSKRVSTFEQKAKLVRDAIEDLLEADDDLADMYLTEKTHDLYRGEDDHTEVEMLLESYHKLTDEIVQEAGNLVSGIRNTEEIVRAILDANRNALMLLDLKFSVGTLGLAMGTFLAGLYGMNLENFIEETNWGFAGVTGVSVVFSLIVCWYGLTKLRRVQRIKMMDAERPAIARGQSYFPDDRSALGLLDNRNREMLRRINMQKAVSQQKKKWL.

The N-terminal 26 residues, 1 to 26, are a transit peptide targeting the mitochondrion; it reads MQSTLCLPVPSRSLLRFLRCQSKRAF. The segment at 79–112 is disordered; sequence DPVTRKLPDRNQPLTSQNHFSTSRNAQGFWSGRK. Residues 90-112 show a composition bias toward polar residues; sequence QPLTSQNHFSTSRNAQGFWSGRK. 2 consecutive transmembrane segments (helical) span residues 425-445 and 456-476; these read FSVG…YGMN and GFAG…WYGL. Residues 442-445 carry the YGMN motif; that stretch reads YGMN.

The protein belongs to the CorA metal ion transporter (MIT) (TC 1.A.35) family. Homopentamer. Forms homooligomers. Interacts with MFM1.

Its subcellular location is the mitochondrion inner membrane. Functionally, high-conductance magnesium-selective channel that mediates the influx of magnesium into the mitochondrial matrix. Essential for the splicing of mRNA group II introns in mitochondria by affecting mitochondrial magnesium concentrations, which are critical for group II intron splicing. It also suppresses a variety of mitochondrial intron mutations and its absence may disturb the assembly of mitochondrial membrane complexes. The polypeptide is Mitochondrial inner membrane magnesium transporter MRS2 (MRS2) (Gibberella zeae (strain ATCC MYA-4620 / CBS 123657 / FGSC 9075 / NRRL 31084 / PH-1) (Wheat head blight fungus)).